Consider the following 449-residue polypeptide: MFS acetylaranotin efflux transporter ataA (449 aa).

7 consecutive transmembrane segments (helical) span residues 6-26 (SVYV…TAIP), 45-65 (YLLV…YFPI), 67-87 (WVFL…GAAP), 115-135 (FYIN…FLHV), 155-175 (LGVV…QWGG), 182-202 (NGRI…FLAI), and 227-247 (LFMT…PIWF). N-linked (GlcNAc...) asparagine glycosylation is present at Asn252. Transmembrane regions (helical) follow at residues 260–280 (IMCL…GGGV), 287–307 (VPFF…MTTF), 321–341 (VLLG…VQAV), 349–369 (VGTA…VSVA), and 420–440 (ALVS…LGAV).

This sequence belongs to the major facilitator superfamily.

It localises to the cell membrane. Functionally, efflux pump that may provide the dual role of acetylaranotin export and self-protection by allowing the fungus to evade the harmful effect of its own acetylaranotin production. This is MFS acetylaranotin efflux transporter ataA from Aspergillus terreus (strain NIH 2624 / FGSC A1156).